The following is a 239-amino-acid chain: Large ribosomal subunit protein uL1 (239 aa).

It belongs to the universal ribosomal protein uL1 family. As to quaternary structure, part of the 50S ribosomal subunit.

Binds directly to 23S rRNA. The L1 stalk is quite mobile in the ribosome, and is involved in E site tRNA release. In terms of biological role, protein L1 is also a translational repressor protein, it controls the translation of the L11 operon by binding to its mRNA. The protein is Large ribosomal subunit protein uL1 of Rhodococcus erythropolis (strain PR4 / NBRC 100887).